Consider the following 217-residue polypeptide: uncharacterized protein (217 aa).

Disordered stretches follow at residues 1 to 85 (MGVK…RGNT) and 167 to 189 (KLRS…EPDE). The span at 38 to 48 (AKSDKDKRKGS) shows a compositional bias: basic and acidic residues. Residues 60–78 (NALPTKNLTTPPALNPLTT) show a composition bias toward low complexity. Over residues 172–189 (PHKDQHNSATNKDQEPDE) the composition is skewed to basic and acidic residues.

This is an uncharacterized protein from Saccharomyces cerevisiae (strain ATCC 204508 / S288c) (Baker's yeast).